Here is a 235-residue protein sequence, read N- to C-terminus: UPF0758 protein A1S_2918 (235 aa).

The interval 1–20 (MNTSIKNWPEQERPRERLLQ) is disordered. Over residues 9–18 (PEQERPRERL) the composition is skewed to basic and acidic residues. The MPN domain occupies 105-227 (SLHSSHLVLD…SFSFAEQQLL (123 aa)). Residues His176, His178, and Asp189 each contribute to the Zn(2+) site. The short motif at 176-189 (HNHPFGSPQPSPED) is the JAMM motif element.

The protein belongs to the UPF0758 family.

The polypeptide is UPF0758 protein A1S_2918 (Acinetobacter baumannii (strain ATCC 17978 / DSM 105126 / CIP 53.77 / LMG 1025 / NCDC KC755 / 5377)).